A 514-amino-acid chain; its full sequence is 2-isopropylmalate synthase (514 aa).

The Pyruvate carboxyltransferase domain maps to 5-268; sequence LIIFDTTLRD…DVGIDTSQIV (264 aa). Residues Asp14, His202, His204, and Asn239 each coordinate Mn(2+). The regulatory domain stretch occupies residues 395–514; the sequence is KFVSLSQRSE…KDDKVNPQRS (120 aa).

It belongs to the alpha-IPM synthase/homocitrate synthase family. LeuA type 1 subfamily. In terms of assembly, homodimer. It depends on Mn(2+) as a cofactor.

The protein resides in the cytoplasm. It carries out the reaction 3-methyl-2-oxobutanoate + acetyl-CoA + H2O = (2S)-2-isopropylmalate + CoA + H(+). The protein operates within amino-acid biosynthesis; L-leucine biosynthesis; L-leucine from 3-methyl-2-oxobutanoate: step 1/4. Its function is as follows. Catalyzes the condensation of the acetyl group of acetyl-CoA with 3-methyl-2-oxobutanoate (2-ketoisovalerate) to form 3-carboxy-3-hydroxy-4-methylpentanoate (2-isopropylmalate). The chain is 2-isopropylmalate synthase from Burkholderia cenocepacia (strain ATCC BAA-245 / DSM 16553 / LMG 16656 / NCTC 13227 / J2315 / CF5610) (Burkholderia cepacia (strain J2315)).